The primary structure comprises 937 residues: Protein translocase subunit SecA (937 aa).

Residues Gln90, 108–112 (GEGKT), and Asp509 each bind ATP.

The protein belongs to the SecA family. As to quaternary structure, monomer and homodimer. Part of the essential Sec protein translocation apparatus which comprises SecA, SecYEG and auxiliary proteins SecDF. Other proteins may also be involved.

The protein localises to the cell inner membrane. Its subcellular location is the cellular thylakoid membrane. It localises to the cytoplasm. The catalysed reaction is ATP + H2O + cellular proteinSide 1 = ADP + phosphate + cellular proteinSide 2.. In terms of biological role, part of the Sec protein translocase complex. Interacts with the SecYEG preprotein conducting channel. Has a central role in coupling the hydrolysis of ATP to the transfer of proteins into and across the cell membrane, serving as an ATP-driven molecular motor driving the stepwise translocation of polypeptide chains across the membrane. Probably participates in protein translocation into and across both the cytoplasmic and thylakoid membranes in cyanobacterial cells. The chain is Protein translocase subunit SecA from Synechococcus sp. (strain CC9902).